We begin with the raw amino-acid sequence, 443 residues long: RILP-like protein homolog (443 aa).

In terms of domain architecture, RH1 spans 8–96 (EMGEMVLDAI…ESEKLEKAEF (89 aa)). Residues 59-315 (LELLEALATK…TLNEQLAELK (257 aa)) are a coiled coil. The RH2 domain occupies 282 to 401 (RPRYTTRELK…KSSESGIRKF (120 aa)). The interval 311 to 394 (LAELKPPSQA…PDDAPWKKSS (84 aa)) is disordered. Acidic residues predominate over residues 332–355 (DDSDEDDDGHVADNDDDDDEEEAA). Residues 356-368 (AEANELEPPAAGE) show a composition bias toward low complexity.

This sequence belongs to the RILPL family. As to quaternary structure, interacts with Arl8 (in GTP-bound form).

The protein resides in the lysosome membrane. Functionally, may have a role in lysosome distribution by interacting with Arl8. This chain is RILP-like protein homolog, found in Drosophila melanogaster (Fruit fly).